The chain runs to 388 residues: Succinate--CoA ligase [ADP-forming] subunit beta (388 aa).

The 236-residue stretch at 9-244 folds into the ATP-grasp domain; the sequence is KQLFAEYGLP…PSQDDPREAH (236 aa). ATP is bound by residues Lys46, 53–55, Glu99, Thr102, and Glu107; that span reads GRG. The Mg(2+) site is built by Asn199 and Asp213. Residues Asn264 and 321 to 323 each bind substrate; that span reads GIV.

It belongs to the succinate/malate CoA ligase beta subunit family. In terms of assembly, heterotetramer of two alpha and two beta subunits. Mg(2+) serves as cofactor.

The enzyme catalyses succinate + ATP + CoA = succinyl-CoA + ADP + phosphate. It carries out the reaction GTP + succinate + CoA = succinyl-CoA + GDP + phosphate. It functions in the pathway carbohydrate metabolism; tricarboxylic acid cycle; succinate from succinyl-CoA (ligase route): step 1/1. In terms of biological role, succinyl-CoA synthetase functions in the citric acid cycle (TCA), coupling the hydrolysis of succinyl-CoA to the synthesis of either ATP or GTP and thus represents the only step of substrate-level phosphorylation in the TCA. The beta subunit provides nucleotide specificity of the enzyme and binds the substrate succinate, while the binding sites for coenzyme A and phosphate are found in the alpha subunit. This chain is Succinate--CoA ligase [ADP-forming] subunit beta, found in Aeromonas hydrophila subsp. hydrophila (strain ATCC 7966 / DSM 30187 / BCRC 13018 / CCUG 14551 / JCM 1027 / KCTC 2358 / NCIMB 9240 / NCTC 8049).